The primary structure comprises 304 residues: MGDSTKKAETAKDVGTSQEKREARPLPTAADFEGKDTSEDTDGRAADADGEMSLERRLDSLREFLRERRGAIRVTNPGLETGRPRLQLAENMRPDPTNPYNRPSIEALSRIKPIAISNNMATSEDMMRIYVNLEGLGVPTEHVQQVVIQAVLFCKDASSSVFLDPRGSFEWPRGAITADAVLAVLKKDAETLRRVCRLYAPVTWNHMLTHNAPPAEWAAMGFQYEDRFAPFDCFDYVENTAAVQPLEGLIRRPTPREKVAHNTHKDIALRGANRNQVFSSLNAEVTGGMNGPELTRDYVKSNRK.

2 stretches are compositionally biased toward basic and acidic residues: residues 1-24 (MGDS…REAR) and 32-54 (FEGK…EMSL). Residues 1-54 (MGDSTKKAETAKDVGTSQEKREARPLPTAADFEGKDTSEDTDGRAADADGEMSL) are disordered.

It belongs to the potexviruses coat protein family.

The protein resides in the virion. Its function is as follows. Required for genome encapsidation. Forms ribonucleoprotein complexes along with TGB1 helicase and viral RNA. This is Capsid protein from Potato virus M (strain German) (PVM).